The sequence spans 382 residues: Histone acetyltransferase type B subunit 2 (382 aa).

5 WD repeats span residues Glu98–His138, Pro141–Lys181, Ile184–Gln224, Glu228–Gly268, and Gly275–Gln315. Residues Glu317–Asp321 form an interaction with the histone H4 N-terminus region. One copy of the WD 6 repeat lies at Gly332 to Glu372.

The protein belongs to the WD repeat RBAP46/RBAP48/MSI1 family. As to quaternary structure, component of the HAT-B complex composed of at least HAT1 and HAT2. The HAT-B complex binds to histone H4 tail.

It localises to the cytoplasm. It is found in the nucleus. In terms of biological role, regulatory subunit of the histone acetylase B (HAT-B) complex. The complex acetylates 'Lys-14' of histone H4 which is required for telomeric silencing. The protein is Histone acetyltransferase type B subunit 2 (HAT2) of Candida albicans (strain SC5314 / ATCC MYA-2876) (Yeast).